The primary structure comprises 133 residues: uncharacterized protein (133 aa).

The first 23 residues, 1 to 23 (MSRKIIPALTIFFGPILILTAIT), serve as a signal peptide directing secretion. The tract at residues 82-133 (ESIKNQNSLNKEKQQQQQQQQQQQQQQQQQQQQQQKPNTPPTPLTTPSTPKK) is disordered. Residues 96–118 (QQQQQQQQQQQQQQQQQQQQQKP) are compositionally biased toward low complexity.

Its subcellular location is the secreted. This is an uncharacterized protein from Dictyostelium discoideum (Social amoeba).